Consider the following 695-residue polypeptide: Follicle-stimulating hormone receptor (695 aa).

The signal sequence occupies residues Met-1–Gly-17. 2 disulfide bridges follow: Cys-18/Cys-25 and Cys-23/Cys-32. Residues Cys-18–Arg-46 form the LRRNT domain. Over Cys-18–Arg-366 the chain is Extracellular. LRR repeat units follow at residues Val-49–Leu-72, Glu-73–Leu-97, His-98–Asn-118, Leu-119–Ser-143, Leu-144–Ser-169, Phe-170–Gly-192, Thr-193–Gly-216, Ala-217–Asn-240, and Leu-241–Glu-259. Asn-191 and Asn-199 each carry an N-linked (GlcNAc...) asparagine glycan. Intrachain disulfides connect Cys-275-Cys-346, Cys-276-Cys-292, Cys-276-Cys-356, and Cys-292-Cys-338. N-linked (GlcNAc...) asparagine glycosylation occurs at Asn-293. Position 335 is a sulfotyrosine (Tyr-335). Residues Val-367–Leu-387 form a helical membrane-spanning segment. Over Ile-388–Arg-398 the chain is Cytoplasmic. The chain crosses the membrane as a helical span at residues Phe-399–Val-421. At Asp-422–Asp-443 the chain is on the extracellular side. Cys-442 and Cys-517 are oxidised to a cystine. The chain crosses the membrane as a helical span at residues Ala-444–Leu-465. Over Glu-466–His-485 the chain is Cytoplasmic. A helical transmembrane segment spans residues Ala-486 to Ile-508. The Extracellular portion of the chain corresponds to Ser-509–Gln-528. The chain crosses the membrane as a helical span at residues Leu-529–Thr-550. Topologically, residues His-551–Arg-573 are cytoplasmic. Residues Met-574–Leu-597 form a helical membrane-spanning segment. The Extracellular portion of the chain corresponds to Lys-598 to Lys-608. The chain crosses the membrane as a helical span at residues Ile-609–Thr-630. At Lys-631 to Asn-695 the chain is on the cytoplasmic side.

It belongs to the G-protein coupled receptor 1 family. FSH/LSH/TSH subfamily. As to quaternary structure, homotrimer. Functions as a homotrimer binding the FSH hormone heterodimer composed of CGA and FSHB. Interacts with ARRB2. Interacts with APPL2; interaction is independent of follicle stimulating hormone stimulation. N-glycosylated; indirectly required for FSH-binding, possibly via a conformational change that allows high affinity binding of hormone. In terms of processing, sulfated.

It is found in the cell membrane. In terms of biological role, g protein-coupled receptor for follitropin, the follicle-stimulating hormone. Through cAMP production activates the downstream PI3K-AKT and ERK1/ERK2 signaling pathways. In Bos taurus (Bovine), this protein is Follicle-stimulating hormone receptor (FSHR).